Reading from the N-terminus, the 149-residue chain is Ribonuclease pancreatic (149 aa).

Positions 1–25 (MGLEKSLILLPLLVLVLAWVQPSLG) are cleaved as a signal peptide. Residues lysine 32 and arginine 35 each contribute to the substrate site. Histidine 37 serves as the catalytic Proton acceptor. 4 disulfides stabilise this stretch: cysteine 51–cysteine 109, cysteine 65–cysteine 120, cysteine 83–cysteine 135, and cysteine 90–cysteine 97. A substrate-binding site is contributed by 66–70 (KRVNT). Asparagine 87 carries N-linked (GlcNAc...) asparagine glycosylation. Lysine 91 and arginine 110 together coordinate substrate. Histidine 144 functions as the Proton donor in the catalytic mechanism.

It belongs to the pancreatic ribonuclease family. In terms of assembly, monomer. Interacts with and forms tight 1:1 complexes with RNH1. Dimerization of two such complexes may occur. Interaction with RNH1 inhibits this protein. In terms of tissue distribution, pancreas.

It is found in the secreted. It catalyses the reaction an [RNA] containing cytidine + H2O = an [RNA]-3'-cytidine-3'-phosphate + a 5'-hydroxy-ribonucleotide-3'-[RNA].. It carries out the reaction an [RNA] containing uridine + H2O = an [RNA]-3'-uridine-3'-phosphate + a 5'-hydroxy-ribonucleotide-3'-[RNA].. Its function is as follows. Endonuclease that catalyzes the cleavage of RNA on the 3' side of pyrimidine nucleotides. Acts on single-stranded and double-stranded RNA. In Acomys cahirinus (Cairo spiny mouse), this protein is Ribonuclease pancreatic (RNASE1).